The following is a 256-amino-acid chain: Isoprenyl transferase (256 aa).

Residue aspartate 33 is part of the active site. Residue aspartate 33 participates in Mg(2+) binding. Residues 34 to 37 (GNGR), tryptophan 38, arginine 46, histidine 50, and 78 to 80 (STE) each bind substrate. Asparagine 81 functions as the Proton acceptor in the catalytic mechanism. Residues tryptophan 82, arginine 84, arginine 201, and 207–209 (RIS) each bind substrate. Mg(2+) is bound at residue glutamate 220.

It belongs to the UPP synthase family. In terms of assembly, homodimer. Mg(2+) is required as a cofactor.

Its function is as follows. Catalyzes the condensation of isopentenyl diphosphate (IPP) with allylic pyrophosphates generating different type of terpenoids. This is Isoprenyl transferase from Staphylococcus aureus (strain Mu50 / ATCC 700699).